The chain runs to 338 residues: UDP-3-O-acylglucosamine N-acyltransferase (338 aa).

His-239 (proton acceptor) is an active-site residue.

Belongs to the transferase hexapeptide repeat family. LpxD subfamily. In terms of assembly, homotrimer.

The catalysed reaction is a UDP-3-O-[(3R)-3-hydroxyacyl]-alpha-D-glucosamine + a (3R)-hydroxyacyl-[ACP] = a UDP-2-N,3-O-bis[(3R)-3-hydroxyacyl]-alpha-D-glucosamine + holo-[ACP] + H(+). The protein operates within bacterial outer membrane biogenesis; LPS lipid A biosynthesis. Its function is as follows. Catalyzes the N-acylation of UDP-3-O-acylglucosamine using 3-hydroxyacyl-ACP as the acyl donor. Is involved in the biosynthesis of lipid A, a phosphorylated glycolipid that anchors the lipopolysaccharide to the outer membrane of the cell. This Xylella fastidiosa (strain 9a5c) protein is UDP-3-O-acylglucosamine N-acyltransferase.